Consider the following 550-residue polypeptide: Glycosyltransferase-like protein gnt12 (550 aa).

The segment at 1-29 is disordered; that stretch reads MSYLPLYNNNNNINNNNNNNNNRINNNKE. At 1–36 the chain is on the cytoplasmic side; that stretch reads MSYLPLYNNNNNINNNNNNNNNRINNNKEKGVKNKP. Residues 8 to 25 are compositionally biased toward low complexity; the sequence is NNNNNINNNNNNNNNRIN. A helical; Signal-anchor for type II membrane protein transmembrane segment spans residues 37 to 57; that stretch reads FQIFISIVFIVFLCFFLIWSM. The Extracellular portion of the chain corresponds to 58–550; it reads EAKKDKNIKI…LFNEPLTNEC (493 aa). A compositionally biased stretch (low complexity) spans 81–97; that stretch reads LINEPINNNKNNKNNIP. The interval 81–100 is disordered; that stretch reads LINEPINNNKNNKNNIPKNH. N-linked (GlcNAc...) asparagine glycans are attached at residues Asn233, Asn322, and Asn426.

It belongs to the glycosyltransferase 8 family. Highly divergent.

It is found in the membrane. This Dictyostelium discoideum (Social amoeba) protein is Glycosyltransferase-like protein gnt12 (gnt12).